An 87-amino-acid chain; its full sequence is Small ribosomal subunit protein bS20 (87 aa).

Residues 1–27 (MANIKSAKKRALQSEKRRQHNASRRSM) form a disordered region.

This sequence belongs to the bacterial ribosomal protein bS20 family.

Binds directly to 16S ribosomal RNA. This chain is Small ribosomal subunit protein bS20, found in Aeromonas hydrophila subsp. hydrophila (strain ATCC 7966 / DSM 30187 / BCRC 13018 / CCUG 14551 / JCM 1027 / KCTC 2358 / NCIMB 9240 / NCTC 8049).